A 715-amino-acid polypeptide reads, in one-letter code: Patatin-like phospholipase domain-containing protein ATEG_02594 (715 aa).

A helical transmembrane segment spans residues 84–104; the sequence is WPFLAFVLGWISFLGVAYILT. The 192-residue stretch at 274 to 465 folds into the PNPLA domain; it reads LCLSGGATFA…RTDIPIKALN (192 aa). The GXSXG motif lies at 305–309; sequence GTSGG. Ser-307 acts as the Nucleophile in catalysis. The active-site Proton acceptor is the Asp-452. The segment at 613 to 715 is disordered; that stretch reads TAPRGGGRAT…DVDSDTWKGQ (103 aa). Positions 652–661 are enriched in basic and acidic residues; the sequence is RTGEYSKEAD. The segment covering 665-678 has biased composition (polar residues); sequence AEMSDSSGVDSATA.

Belongs to the PLPL family.

It is found in the membrane. In terms of biological role, probable lipid hydrolase. This chain is Patatin-like phospholipase domain-containing protein ATEG_02594, found in Aspergillus terreus (strain NIH 2624 / FGSC A1156).